Here is a 244-residue protein sequence, read N- to C-terminus: tRNA (guanine-N(1)-)-methyltransferase (244 aa).

S-adenosyl-L-methionine contacts are provided by residues Gly-111 and Ile-130–Leu-135.

Belongs to the RNA methyltransferase TrmD family. Homodimer.

It is found in the cytoplasm. The catalysed reaction is guanosine(37) in tRNA + S-adenosyl-L-methionine = N(1)-methylguanosine(37) in tRNA + S-adenosyl-L-homocysteine + H(+). Its function is as follows. Specifically methylates guanosine-37 in various tRNAs. This is tRNA (guanine-N(1)-)-methyltransferase from Phytoplasma australiense.